The chain runs to 263 residues: 4-hydroxy-2-oxo-heptane-1,7-dioate aldolase (263 aa).

The active-site Proton acceptor is H45. Q147 lines the substrate pocket. A divalent metal cation is bound at residue E149. The substrate site is built by A174 and D175. A divalent metal cation is bound at residue D175.

It belongs to the HpcH/HpaI aldolase family. As to quaternary structure, homohexamer; trimer of dimers. A divalent metal cation is required as a cofactor.

The catalysed reaction is 4-hydroxy-2-oxoheptanedioate = succinate semialdehyde + pyruvate. The protein operates within aromatic compound metabolism; 4-hydroxyphenylacetate degradation; pyruvate and succinate semialdehyde from 4-hydroxyphenylacetate: step 7/7. In terms of biological role, catalyzes the reversible retro-aldol cleavage of 4-hydroxy-2-ketoheptane-1,7-dioate (HKHD) to pyruvate and succinic semialdehyde. The sequence is that of 4-hydroxy-2-oxo-heptane-1,7-dioate aldolase from Salmonella paratyphi A (strain ATCC 9150 / SARB42).